A 507-amino-acid polypeptide reads, in one-letter code: MNKDINIAAIIKNEIENFEGKIQNHDIGKVIIVGDGVALVSGIEKVKFGELVEFENNVLGIALNLEQDLIGVVIMASENSVFQGSIVRRTKSVISITVGDQLLGRVVNALGIPIDGKAELDNSLKSAIFTNAPSIMDRKSVDRGLKTGILAIDSLVPIGKGQRELIIGDRQTGKTTIAIDAILNQKGKNVYCVYVAIGQKNSSVAQIVSLLEKKGAFEYTTVILAGASELSPLQYLAPYSGAAIAEYWMNKKKDVLIIYDDLSKHAIAYRTLSLLLRRPPGREAFPGDIFYQHSYLLERSAQLSNDKGGGSITALPIIETQAGDISAYIPTNVISITDGQIFLRDSLFNSGQKPAIDIGLSVSRVGSAAQTNLMKWASSSLKLNLAQYNELKAFAQFGSDLGPSSQLILDRGNKIYEILKQENQYPLTERQQIMLLILIRENLIDSLEQKSIPLFKSAFLKYCDSEPKFRDKIEKMDYNRVLEPNNLAGILKDITDFIEKFNLGNVF.

ATP is bound at residue 168–175; that stretch reads GDRQTGKT.

This sequence belongs to the ATPase alpha/beta chains family. In terms of assembly, F-type ATPases have 2 components, CF(1) - the catalytic core - and CF(0) - the membrane proton channel. CF(1) has five subunits: alpha(3), beta(3), gamma(1), delta(1), epsilon(1). CF(0) has three main subunits: a(1), b(2) and c(9-12). The alpha and beta chains form an alternating ring which encloses part of the gamma chain. CF(1) is attached to CF(0) by a central stalk formed by the gamma and epsilon chains, while a peripheral stalk is formed by the delta and b chains.

Its subcellular location is the cell membrane. The catalysed reaction is ATP + H2O + 4 H(+)(in) = ADP + phosphate + 5 H(+)(out). Functionally, produces ATP from ADP in the presence of a proton gradient across the membrane. The alpha chain is a regulatory subunit. The sequence is that of ATP synthase subunit alpha from Mesomycoplasma hyopneumoniae (strain 232) (Mycoplasma hyopneumoniae).